Consider the following 542-residue polypeptide: Chaperonin GroEL (542 aa).

ATP contacts are provided by residues 29–32, 86–90, Gly-413, 476–478, and Asp-492; these read TMGP, DGTTT, and NAA. The segment at 521-542 is disordered; sequence KPDPNANNQAPAAPQGGMGGMM. Positions 524–535 are enriched in low complexity; sequence PNANNQAPAAPQ.

It belongs to the chaperonin (HSP60) family. In terms of assembly, forms a cylinder of 14 subunits composed of two heptameric rings stacked back-to-back. Interacts with the co-chaperonin GroES.

It is found in the cytoplasm. It carries out the reaction ATP + H2O + a folded polypeptide = ADP + phosphate + an unfolded polypeptide.. Its function is as follows. Together with its co-chaperonin GroES, plays an essential role in assisting protein folding. The GroEL-GroES system forms a nano-cage that allows encapsulation of the non-native substrate proteins and provides a physical environment optimized to promote and accelerate protein folding. The sequence is that of Chaperonin GroEL from Limosilactobacillus reuteri subsp. reuteri (strain JCM 1112) (Lactobacillus reuteri).